The primary structure comprises 511 residues: Phosphoenolpyruvate carboxylase (511 aa).

Belongs to the PEPCase type 2 family. As to quaternary structure, homotetramer. Mg(2+) is required as a cofactor.

The enzyme catalyses oxaloacetate + phosphate = phosphoenolpyruvate + hydrogencarbonate. In terms of biological role, catalyzes the irreversible beta-carboxylation of phosphoenolpyruvate (PEP) to form oxaloacetate (OAA), a four-carbon dicarboxylic acid source for the tricarboxylic acid cycle. This chain is Phosphoenolpyruvate carboxylase, found in Saccharolobus islandicus (strain M.16.27) (Sulfolobus islandicus).